The sequence spans 377 residues: MGIKGLSQVIADNCPSAVRHNDIKNYFGRKVAIDASMSLYQFLIQVRGQDGQQLMNDQGETTSHLMGMFYRTLRMVDNGLKPCYVFDGKPPTLKSGELAKRASRQQKAREEREEAKEVGTAEMVDKFAKRTVRVTRQHNDEAKKLLELMGIPYVNAPCEAEAQCAALARAGKVYAAASEDMDTMCFQAPILLRHLTFSEQRKEPISEYSFEKTIEGLNFTIEQFVDLCILLGCDYCDPIRGVGPARAVELIRQHGNLDNFVKDADKKKFPIPEDWPYQDARRLFLEAEVQEAKDIELKWRAPDEQGIIKFLVEEKGFNEDRVRVGINRLVKASKTIPQGRLDSFFKVLPSTKKEKEKPKAAAKRKRDTKSSAPKKKR.

The N-domain stretch occupies residues 1–105 (MGIKGLSQVI…GELAKRASRQ (105 aa)). Position 34 (aspartate 34) interacts with Mg(2+). DNA is bound by residues arginine 47 and arginine 71. Aspartate 87 serves as a coordination point for Mg(2+). Residues 96–115 (GELAKRASRQQKAREEREEA) form a disordered region. The interval 123-254 (MVDKFAKRTV…ARAVELIRQH (132 aa)) is I-domain. Residues glutamate 159, glutamate 161, aspartate 180, and aspartate 182 each coordinate Mg(2+). Glutamate 159 lines the DNA pocket. DNA-binding residues include glycine 232 and aspartate 234. Aspartate 234 provides a ligand contact to Mg(2+). An interaction with PCNA region spans residues 337–345 (PQGRLDSFF). A disordered region spans residues 350–377 (STKKEKEKPKAAAKRKRDTKSSAPKKKR). The span at 360 to 377 (AAAKRKRDTKSSAPKKKR) shows a compositional bias: basic residues.

The protein belongs to the XPG/RAD2 endonuclease family. FEN1 subfamily. In terms of assembly, interacts with PCNA. Three molecules of rad2 bind to one PCNA trimer with each molecule binding to one PCNA monomer. PCNA stimulates the nuclease activity without altering cleavage specificity. Mg(2+) is required as a cofactor. In terms of processing, phosphorylated. Phosphorylation upon DNA damage induces relocalization to the nuclear plasma.

The protein localises to the nucleus. It localises to the nucleolus. It is found in the nucleoplasm. The protein resides in the mitochondrion. In terms of biological role, structure-specific nuclease with 5'-flap endonuclease and 5'-3' exonuclease activities involved in DNA replication and repair. During DNA replication, cleaves the 5'-overhanging flap structure that is generated by displacement synthesis when DNA polymerase encounters the 5'-end of a downstream Okazaki fragment. It enters the flap from the 5'-end and then tracks to cleave the flap base, leaving a nick for ligation. Also involved in the long patch base excision repair (LP-BER) pathway, by cleaving within the apurinic/apyrimidinic (AP) site-terminated flap. Acts as a genome stabilization factor that prevents flaps from equilibrating into structures that lead to duplications and deletions. Also possesses 5'-3' exonuclease activity on nicked or gapped double-stranded DNA, and exhibits RNase H activity. Also involved in replication and repair of rDNA and in repairing mitochondrial DNA. In Schizosaccharomyces japonicus (strain yFS275 / FY16936) (Fission yeast), this protein is Flap endonuclease 1.